Here is a 101-residue protein sequence, read N- to C-terminus: Urease subunit beta (101 aa).

Belongs to the urease beta subunit family. Heterotrimer of UreA (gamma), UreB (beta) and UreC (alpha) subunits. Three heterotrimers associate to form the active enzyme.

The protein localises to the cytoplasm. It catalyses the reaction urea + 2 H2O + H(+) = hydrogencarbonate + 2 NH4(+). Its pathway is nitrogen metabolism; urea degradation; CO(2) and NH(3) from urea (urease route): step 1/1. The sequence is that of Urease subunit beta from Thermosynechococcus vestitus (strain NIES-2133 / IAM M-273 / BP-1).